The following is a 736-amino-acid chain: Acyl-coenzyme A oxidase (736 aa).

Belongs to the acyl-CoA oxidase family. It depends on FAD as a cofactor.

It is found in the peroxisome. It catalyses the reaction a 2,3-saturated acyl-CoA + O2 = a (2E)-enoyl-CoA + H2O2. It functions in the pathway lipid metabolism; peroxisomal fatty acid beta-oxidation. The polypeptide is Acyl-coenzyme A oxidase (POX1) (Kluyveromyces lactis (strain ATCC 8585 / CBS 2359 / DSM 70799 / NBRC 1267 / NRRL Y-1140 / WM37) (Yeast)).